Consider the following 374-residue polypeptide: P2Y purinoceptor 11 (374 aa).

Residues 1 to 29 are Extracellular-facing; that stretch reads MAANVSGAKSCPANFLAAADDKLSGFQGD. Asn4 carries an N-linked (GlcNAc...) asparagine glycan. Residues 30 to 50 form a helical membrane-spanning segment; the sequence is FLWPILVVEFLVAVASNGLAL. Topologically, residues 51–64 are cytoplasmic; the sequence is YRFSIRKQRPWHPA. A helical transmembrane segment spans residues 65 to 85; it reads VVFSVQLAVSDLLCALTLPPL. Residues 86-116 are Extracellular-facing; it reads AAYLYPPKHWRYGEAACRLERFLFTCNLLGS. A disulfide bridge links Cys102 with Cys180. The chain crosses the membrane as a helical span at residues 117 to 137; it reads VIFITCISLNRYLGIVHPFFA. The Cytoplasmic segment spans residues 138-146; the sequence is RSHLRPKHA. Residues 147–167 traverse the membrane as a helical segment; the sequence is WAVSAAGWVLAALLAMPTLSF. Over 168–206 the chain is Extracellular; it reads SHLKRPQQGAGNCSVARPEACIKCLGTADHGLAAYRAYS. Residue Asn179 is glycosylated (N-linked (GlcNAc...) asparagine). The helical transmembrane segment at 207–227 threads the bilayer; that stretch reads LVLAGLGCGLPLLLTLAAYGA. Residues 228–245 lie on the Cytoplasmic side of the membrane; that stretch reads LGRAVLRSPGMTVAEKLR. The helical transmembrane segment at 246–266 threads the bilayer; it reads VAALVASGVALYASSYVPYHI. Topologically, residues 267–308 are extracellular; sequence MRVLNVDARRRWSTRCPSFADIAQATAALELGPYVGYQVMRG. Residues 309–329 traverse the membrane as a helical segment; it reads LMPLAFCVHPLLYMAAVPSLG. At 330-374 the chain is on the cytoplasmic side; it reads CCCRHCPGYRDSWNPEDAKSTGQALPLNATAAPKPSEPQSRELSQ. Residues 345–374 are disordered; that stretch reads EDAKSTGQALPLNATAAPKPSEPQSRELSQ.

Belongs to the G-protein coupled receptor 1 family. In terms of tissue distribution, highest expression in liver and spleen.

The protein localises to the cell membrane. Functionally, receptor for ATP and ADP coupled to G-proteins that activate both phosphatidylinositol-calcium and adenylyl cyclase second messenger systems. Not activated by UTP or UDP. This is P2Y purinoceptor 11 (P2RY11) from Homo sapiens (Human).